A 71-amino-acid chain; its full sequence is UPF0346 protein str0441 (71 aa).

The protein belongs to the UPF0346 family.

This is UPF0346 protein str0441 from Streptococcus thermophilus (strain CNRZ 1066).